The chain runs to 364 residues: tRNA(Met) cytidine acetate ligase (364 aa).

ATP is bound by residues 7 to 20, Gly96, Asn152, and Arg175; that span reads IAEF…HKYL.

Belongs to the TmcAL family.

The protein resides in the cytoplasm. It catalyses the reaction cytidine(34) in elongator tRNA(Met) + acetate + ATP = N(4)-acetylcytidine(34) in elongator tRNA(Met) + AMP + diphosphate. Catalyzes the formation of N(4)-acetylcytidine (ac(4)C) at the wobble position of elongator tRNA(Met), using acetate and ATP as substrates. First activates an acetate ion to form acetyladenylate (Ac-AMP) and then transfers the acetyl group to tRNA to form ac(4)C34. The sequence is that of tRNA(Met) cytidine acetate ligase from Streptococcus sanguinis (strain SK36).